The chain runs to 245 residues: 4-hydroxy-tetrahydrodipicolinate reductase (245 aa).

NAD(+) is bound by residues 7–12 (GAKGKV), 75–77 (GTT), and 102–105 (APNF). His132 acts as the Proton donor/acceptor in catalysis. His133 contacts (S)-2,3,4,5-tetrahydrodipicolinate. Lys136 (proton donor) is an active-site residue. Residue 142–143 (GT) participates in (S)-2,3,4,5-tetrahydrodipicolinate binding.

This sequence belongs to the DapB family.

It localises to the cytoplasm. It catalyses the reaction (S)-2,3,4,5-tetrahydrodipicolinate + NAD(+) + H2O = (2S,4S)-4-hydroxy-2,3,4,5-tetrahydrodipicolinate + NADH + H(+). The enzyme catalyses (S)-2,3,4,5-tetrahydrodipicolinate + NADP(+) + H2O = (2S,4S)-4-hydroxy-2,3,4,5-tetrahydrodipicolinate + NADPH + H(+). It participates in amino-acid biosynthesis; L-lysine biosynthesis via DAP pathway; (S)-tetrahydrodipicolinate from L-aspartate: step 4/4. Its function is as follows. Catalyzes the conversion of 4-hydroxy-tetrahydrodipicolinate (HTPA) to tetrahydrodipicolinate. The protein is 4-hydroxy-tetrahydrodipicolinate reductase of Mycobacterium sp. (strain JLS).